Reading from the N-terminus, the 466-residue chain is Bifunctional protein GlmU (466 aa).

The tract at residues 1–236 (MEVMPQPLTI…PAEALGINDR (236 aa)) is pyrophosphorylase. UDP-N-acetyl-alpha-D-glucosamine is bound by residues 13–16 (LAAG), K27, Q79, 84–85 (GT), 107–109 (YGD), G146, E161, N176, and N234. A Mg(2+)-binding site is contributed by D109. N234 contacts Mg(2+). A linker region spans residues 237–257 (AQLAEVDRIFRDRKRRAVMAA). The N-acetyltransferase stretch occupies residues 258-466 (GVTLIQPETI…AKKRRKLAKT (209 aa)). UDP-N-acetyl-alpha-D-glucosamine-binding residues include R340 and K358. The Proton acceptor role is filled by H370. UDP-N-acetyl-alpha-D-glucosamine is bound by residues Y373 and N384. Acetyl-CoA is bound by residues A387, 393–394 (NY), S412, A430, and R447.

The protein in the N-terminal section; belongs to the N-acetylglucosamine-1-phosphate uridyltransferase family. In the C-terminal section; belongs to the transferase hexapeptide repeat family. As to quaternary structure, homotrimer. It depends on Mg(2+) as a cofactor.

The protein localises to the cytoplasm. It catalyses the reaction alpha-D-glucosamine 1-phosphate + acetyl-CoA = N-acetyl-alpha-D-glucosamine 1-phosphate + CoA + H(+). The catalysed reaction is N-acetyl-alpha-D-glucosamine 1-phosphate + UTP + H(+) = UDP-N-acetyl-alpha-D-glucosamine + diphosphate. Its pathway is nucleotide-sugar biosynthesis; UDP-N-acetyl-alpha-D-glucosamine biosynthesis; N-acetyl-alpha-D-glucosamine 1-phosphate from alpha-D-glucosamine 6-phosphate (route II): step 2/2. It participates in nucleotide-sugar biosynthesis; UDP-N-acetyl-alpha-D-glucosamine biosynthesis; UDP-N-acetyl-alpha-D-glucosamine from N-acetyl-alpha-D-glucosamine 1-phosphate: step 1/1. The protein operates within bacterial outer membrane biogenesis; LPS lipid A biosynthesis. Catalyzes the last two sequential reactions in the de novo biosynthetic pathway for UDP-N-acetylglucosamine (UDP-GlcNAc). The C-terminal domain catalyzes the transfer of acetyl group from acetyl coenzyme A to glucosamine-1-phosphate (GlcN-1-P) to produce N-acetylglucosamine-1-phosphate (GlcNAc-1-P), which is converted into UDP-GlcNAc by the transfer of uridine 5-monophosphate (from uridine 5-triphosphate), a reaction catalyzed by the N-terminal domain. This chain is Bifunctional protein GlmU, found in Solibacter usitatus (strain Ellin6076).